We begin with the raw amino-acid sequence, 212 residues long: Pyridoxine/pyridoxamine 5'-phosphate oxidase (212 aa).

Residues Arg7 to Tyr10 and Lys65 contribute to the substrate site. FMN is bound by residues Arg60–Lys65, Phe75–Thr76, Lys82, and Gln104. Positions 122, 126, and 130 each coordinate substrate. FMN-binding positions include Gln139 to Ser140 and Trp184. Arg190–His192 is a substrate binding site. Residue Arg194 coordinates FMN.

Belongs to the pyridoxamine 5'-phosphate oxidase family. As to quaternary structure, homodimer. It depends on FMN as a cofactor.

It carries out the reaction pyridoxamine 5'-phosphate + O2 + H2O = pyridoxal 5'-phosphate + H2O2 + NH4(+). The catalysed reaction is pyridoxine 5'-phosphate + O2 = pyridoxal 5'-phosphate + H2O2. The protein operates within cofactor metabolism; pyridoxal 5'-phosphate salvage; pyridoxal 5'-phosphate from pyridoxamine 5'-phosphate: step 1/1. It participates in cofactor metabolism; pyridoxal 5'-phosphate salvage; pyridoxal 5'-phosphate from pyridoxine 5'-phosphate: step 1/1. Functionally, catalyzes the oxidation of either pyridoxine 5'-phosphate (PNP) or pyridoxamine 5'-phosphate (PMP) into pyridoxal 5'-phosphate (PLP). The protein is Pyridoxine/pyridoxamine 5'-phosphate oxidase of Rippkaea orientalis (strain PCC 8801 / RF-1) (Cyanothece sp. (strain PCC 8801)).